The following is a 317-amino-acid chain: Methionyl-tRNA formyltransferase (317 aa).

Residue 112-115 participates in (6S)-5,6,7,8-tetrahydrofolate binding; the sequence is SILP.

Belongs to the Fmt family.

It carries out the reaction L-methionyl-tRNA(fMet) + (6R)-10-formyltetrahydrofolate = N-formyl-L-methionyl-tRNA(fMet) + (6S)-5,6,7,8-tetrahydrofolate + H(+). Attaches a formyl group to the free amino group of methionyl-tRNA(fMet). The formyl group appears to play a dual role in the initiator identity of N-formylmethionyl-tRNA by promoting its recognition by IF2 and preventing the misappropriation of this tRNA by the elongation apparatus. The protein is Methionyl-tRNA formyltransferase of Actinobacillus succinogenes (strain ATCC 55618 / DSM 22257 / CCUG 43843 / 130Z).